Consider the following 337-residue polypeptide: Large ribosomal subunit protein uL3 (337 aa).

Belongs to the universal ribosomal protein uL3 family. In terms of assembly, part of the 50S ribosomal subunit. Forms a cluster with proteins L14 and L24e.

Functionally, one of the primary rRNA binding proteins, it binds directly near the 3'-end of the 23S rRNA, where it nucleates assembly of the 50S subunit. The chain is Large ribosomal subunit protein uL3 from Methanosphaerula palustris (strain ATCC BAA-1556 / DSM 19958 / E1-9c).